We begin with the raw amino-acid sequence, 197 residues long: Peptide deformylase (197 aa).

The Fe cation site is built by Cys-106 and His-148. Glu-149 is a catalytic residue. Position 152 (His-152) interacts with Fe cation.

It belongs to the polypeptide deformylase family. It depends on Fe(2+) as a cofactor.

It carries out the reaction N-terminal N-formyl-L-methionyl-[peptide] + H2O = N-terminal L-methionyl-[peptide] + formate. Its function is as follows. Removes the formyl group from the N-terminal Met of newly synthesized proteins. Requires at least a dipeptide for an efficient rate of reaction. N-terminal L-methionine is a prerequisite for activity but the enzyme has broad specificity at other positions. The sequence is that of Peptide deformylase from Mycobacterium marinum (strain ATCC BAA-535 / M).